The sequence spans 207 residues: Peptidyl-tRNA hydrolase (207 aa).

Residue tyrosine 15 coordinates tRNA. Catalysis depends on histidine 20, which acts as the Proton acceptor. TRNA-binding residues include phenylalanine 66, asparagine 68, and asparagine 114. The tract at residues 187 to 207 is disordered; that stretch reads HTTKPPRPKPARPATAESDKG. The segment covering 198–207 has biased composition (low complexity); the sequence is RPATAESDKG.

The protein belongs to the PTH family. Monomer.

It localises to the cytoplasm. The enzyme catalyses an N-acyl-L-alpha-aminoacyl-tRNA + H2O = an N-acyl-L-amino acid + a tRNA + H(+). In terms of biological role, hydrolyzes ribosome-free peptidyl-tRNAs (with 1 or more amino acids incorporated), which drop off the ribosome during protein synthesis, or as a result of ribosome stalling. Its function is as follows. Catalyzes the release of premature peptidyl moieties from peptidyl-tRNA molecules trapped in stalled 50S ribosomal subunits, and thus maintains levels of free tRNAs and 50S ribosomes. This Delftia acidovorans (strain DSM 14801 / SPH-1) protein is Peptidyl-tRNA hydrolase.